Consider the following 75-residue polypeptide: Endogenous retrovirus group K member 10 Np9 protein (75 aa).

The segment at 21–43 (PTAPKRQRPSRTGHDDDGGFVEK) is disordered. Residues 32–43 (TGHDDDGGFVEK) are compositionally biased toward basic and acidic residues.

The protein localises to the nucleus. In terms of biological role, may possess a function in tumorigenesis. In Homo sapiens (Human), this protein is Endogenous retrovirus group K member 10 Np9 protein (ERVK-10).